The primary structure comprises 240 residues: MORN repeat-containing protein 3 (240 aa).

The interaction with MDM2 stretch occupies residues 6–35 (CPKKSESLWKGWDRKAQRNGLRSQVYAVNG). MORN repeat units lie at residues 38-60 (YVGE…KKGA), 62-84 (YEGD…DQQT), 91-113 (YSGW…PKEY), 114-136 (YEGD…NGDI), 137-159 (YEGQ…NGNR), 160-182 (YEGC…DHGQ), and 184-205 (FEGF…GRDE). Residues 76 to 100 (TLSLPDQQTGKCRRVYSGWWKGDKK) form an interaction with SIRT1 region. Positions 206-240 (APEPTQFPIPEVKILDPDGVLAEALAMFRKTEEGD) are interaction with TP53.

Interacts with MEIG1. Interacts with TP53, MDM2 and SIRT1; the interactions mediate post-transcriptional modifications of TP53 by MDM2 and SIRT1.

It localises to the cytoplasmic vesicle. It is found in the secretory vesicle. The protein resides in the acrosome. In terms of biological role, assembles a suppression complex (suppresome) by tethering SIRT1 and MDM2 to regulate composite modifications of p53/TP53. Confers both deacetylation-mediated functional inactivation, by SIRT1, and ubiquitination-dependent degradation, by MDM2, of p53/TP53, promoting a proliferative and cell survival behaviors. May play a role in the regulation of spermatogenesis. This is MORN repeat-containing protein 3 from Homo sapiens (Human).